The chain runs to 124 residues: Ribosome-binding factor A (124 aa).

Belongs to the RbfA family. Monomer. Binds 30S ribosomal subunits, but not 50S ribosomal subunits or 70S ribosomes.

The protein localises to the cytoplasm. Functionally, one of several proteins that assist in the late maturation steps of the functional core of the 30S ribosomal subunit. Associates with free 30S ribosomal subunits (but not with 30S subunits that are part of 70S ribosomes or polysomes). Required for efficient processing of 16S rRNA. May interact with the 5'-terminal helix region of 16S rRNA. The polypeptide is Ribosome-binding factor A (Buchnera aphidicola subsp. Schizaphis graminum (strain Sg)).